The sequence spans 281 residues: F-actin-capping protein subunit alpha (281 aa).

Belongs to the F-actin-capping protein alpha subunit family. As to quaternary structure, component of the F-actin capping complex, composed of a heterodimer of an alpha and a beta subunit.

The protein resides in the cytoplasm. The protein localises to the cytoskeleton. Functionally, F-actin-capping proteins bind in a Ca(2+)-independent manner to the fast growing ends of actin filaments (barbed end) thereby blocking the exchange of subunits at these ends. Unlike other capping proteins (such as gelsolin and severin), these proteins do not sever actin filaments. The chain is F-actin-capping protein subunit alpha (acpB) from Dictyostelium discoideum (Social amoeba).